A 389-amino-acid chain; its full sequence is uncharacterized protein (389 aa).

It belongs to the mimivirus L17x/L18x family.

This is an uncharacterized protein from Acanthamoeba polyphaga mimivirus (APMV).